We begin with the raw amino-acid sequence, 166 residues long: Protein TIFY 11e (166 aa).

The 36-residue stretch at 65-100 (ASSAAAQMTIFYGGRVLVLDECPADRAAALLRLAAS) folds into the Tify domain. Residues 123-148 (PVARKASLQRFMEKRKGRLAARGQPY) carry the Jas motif. The short motif at 125–132 (ARKASLQR) is the Nuclear localization signal element.

This sequence belongs to the TIFY/JAZ family. Ubiquitinated. Targeted for degradation by the SCF(COI1) E3 ubiquitin ligase-proteasome pathway during jasmonate signaling.

The protein resides in the nucleus. In terms of biological role, repressor of jasmonate responses. The protein is Protein TIFY 11e of Oryza sativa subsp. japonica (Rice).